A 304-amino-acid polypeptide reads, in one-letter code: Probable WRKY transcription factor 29 (304 aa).

Disordered regions lie at residues 76–96 and 185–236; these read LPED…GCLL and YTNE…IPSA. The span at 78–88 shows a compositional bias: basic and acidic residues; the sequence is EDSKPFRDDKK. The segment at residues 128–194 is a DNA-binding region (WRKY); the sequence is KEENLLSDAW…YTNEHNHELP (67 aa). 2 stretches are compositionally biased toward polar residues: residues 196 to 213 and 225 to 236; these read RRNS…QPKP and SSPTSNPMIPSA.

Belongs to the WRKY group II-e family.

Its subcellular location is the nucleus. Its function is as follows. Transcription factor involved in the expression of defense genes in innate immune response of plants. Interacts specifically with the W box (5'-(T)TGAC[CT]-3'), a frequently occurring elicitor-responsive cis-acting element. Activates WRKY 22, SIRK and its own promoters. The chain is Probable WRKY transcription factor 29 (WRKY29) from Arabidopsis thaliana (Mouse-ear cress).